Consider the following 248-residue polypeptide: tRNA (guanine-N(1)-)-methyltransferase (248 aa).

S-adenosyl-L-methionine is bound by residues G113 and 133 to 138; that span reads IGDYVL.

The protein belongs to the RNA methyltransferase TrmD family. As to quaternary structure, homodimer.

The protein localises to the cytoplasm. It catalyses the reaction guanosine(37) in tRNA + S-adenosyl-L-methionine = N(1)-methylguanosine(37) in tRNA + S-adenosyl-L-homocysteine + H(+). Specifically methylates guanosine-37 in various tRNAs. The protein is tRNA (guanine-N(1)-)-methyltransferase of Shewanella woodyi (strain ATCC 51908 / MS32).